The sequence spans 819 residues: Proteome of basal body protein 15 (819 aa).

Composition is skewed to low complexity over residues 46–59 (PASS…NPGR) and 572–581 (RQQQQQQQHT). Disordered stretches follow at residues 46 to 72 (PASS…LATG) and 564 to 590 (ERQR…GGGV). A coiled-coil region spans residues 546–580 (YVVLREAVARVQARMEQQERQRRLLERQQQQQQQH).

The protein resides in the cytoplasm. Its subcellular location is the cytoskeleton. It localises to the microtubule organizing center. The protein localises to the centrosome. It is found in the centriole. The chain is Proteome of basal body protein 15 from Chlamydomonas reinhardtii (Chlamydomonas smithii).